Reading from the N-terminus, the 252-residue chain is Ubiquinone biosynthesis O-methyltransferase (252 aa).

The S-adenosyl-L-methionine site is built by Arg-45, Gly-76, Asp-97, and Met-141.

The protein belongs to the methyltransferase superfamily. UbiG/COQ3 family.

The enzyme catalyses a 3-demethylubiquinol + S-adenosyl-L-methionine = a ubiquinol + S-adenosyl-L-homocysteine + H(+). It catalyses the reaction a 3-(all-trans-polyprenyl)benzene-1,2-diol + S-adenosyl-L-methionine = a 2-methoxy-6-(all-trans-polyprenyl)phenol + S-adenosyl-L-homocysteine + H(+). It functions in the pathway cofactor biosynthesis; ubiquinone biosynthesis. Its function is as follows. O-methyltransferase that catalyzes the 2 O-methylation steps in the ubiquinone biosynthetic pathway. The chain is Ubiquinone biosynthesis O-methyltransferase from Caulobacter vibrioides (strain ATCC 19089 / CIP 103742 / CB 15) (Caulobacter crescentus).